Here is a 359-residue protein sequence, read N- to C-terminus: 3-dehydroquinate synthase (359 aa).

Residues aspartate 71–lysine 76, glycine 105–aspartate 109, threonine 129–threonine 130, lysine 142, lysine 151, and cysteine 169–threonine 172 each bind NAD(+). Zn(2+) contacts are provided by glutamate 184, histidine 247, and histidine 264.

This sequence belongs to the sugar phosphate cyclases superfamily. Dehydroquinate synthase family. Requires NAD(+) as cofactor. Co(2+) is required as a cofactor. Zn(2+) serves as cofactor.

The protein resides in the cytoplasm. It catalyses the reaction 7-phospho-2-dehydro-3-deoxy-D-arabino-heptonate = 3-dehydroquinate + phosphate. The protein operates within metabolic intermediate biosynthesis; chorismate biosynthesis; chorismate from D-erythrose 4-phosphate and phosphoenolpyruvate: step 2/7. In terms of biological role, catalyzes the conversion of 3-deoxy-D-arabino-heptulosonate 7-phosphate (DAHP) to dehydroquinate (DHQ). In Shewanella oneidensis (strain ATCC 700550 / JCM 31522 / CIP 106686 / LMG 19005 / NCIMB 14063 / MR-1), this protein is 3-dehydroquinate synthase.